Consider the following 130-residue polypeptide: MSGRGKQGGKARAKAKSRSSRAGLQFPVGRVHRLLRKGNYAERVGAGAPVYMAAVLEYLTAEILELAGNAARDNKKTRIIPRHLQLAIRNDEELNKLLGKVTIAQGGVLPNIQAVLLPKKTESHHKAKGK.

Residues 1 to 22 (MSGRGKQGGKARAKAKSRSSRA) form a disordered region. Ser2 carries the post-translational modification N-acetylserine. The residue at position 2 (Ser2) is a Phosphoserine; by RPS6KA5. Arg4 carries the citrulline; alternate modification. Arg4 is modified (symmetric dimethylarginine; by PRMT5; alternate). Residues Lys6 and Lys10 each carry the N6-(2-hydroxyisobutyryl)lysine; alternate modification. N6-(beta-hydroxybutyryl)lysine; alternate is present on Lys6. Lys6 bears the N6-acetyllysine; alternate mark. Residues 7 to 19 (QGGKARAKAKSRS) show a composition bias toward basic residues. At Lys10 the chain carries N6-lactoyllysine; alternate. Lys10 bears the N6-succinyllysine; alternate mark. Residues Lys14 and Lys16 each participate in a glycyl lysine isopeptide (Lys-Gly) (interchain with G-Cter in ubiquitin) cross-link. N6-(2-hydroxyisobutyryl)lysine; alternate is present on Lys37. An N6-(beta-hydroxybutyryl)lysine; alternate modification is found at Lys37. Lys37 carries the N6-crotonyllysine; alternate modification. 2 positions are modified to N6-(2-hydroxyisobutyryl)lysine: Lys75 and Lys76. Residue Lys96 is modified to N6-(2-hydroxyisobutyryl)lysine; alternate. Lys96 is modified (N6-succinyllysine; alternate). N6-glutaryllysine; alternate is present on Lys96. An N6-glutaryllysine modification is found at Lys100. Position 105 is an N5-methylglutamine (Gln105). Lys119 is subject to N6-(2-hydroxyisobutyryl)lysine; alternate. Residues Lys119 and Lys120 each carry the N6-crotonyllysine; alternate modification. An N6-glutaryllysine; alternate mark is found at Lys119 and Lys120. Lys120 bears the N6-(beta-hydroxybutyryl)lysine; alternate mark. Residue Lys120 forms a Glycyl lysine isopeptide (Lys-Gly) (interchain with G-Cter in ubiquitin); alternate linkage. Position 121 is a phosphothreonine; by DCAF1 (Thr121). Lys126 bears the N6-(beta-hydroxybutyryl)lysine; alternate mark. Residue Lys126 is modified to N6-crotonyllysine; alternate. Lys126 is subject to N6-glutaryllysine; alternate.

Belongs to the histone H2A family. As to quaternary structure, the nucleosome is a histone octamer containing two molecules each of H2A, H2B, H3 and H4 assembled in one H3-H4 heterotetramer and two H2A-H2B heterodimers. The octamer wraps approximately 147 bp of DNA. Post-translationally, deiminated on Arg-4 in granulocytes upon calcium entry. In terms of processing, monoubiquitination of Lys-120 (H2AK119Ub) by RING1, TRIM37 and RNF2/RING2 complex gives a specific tag for epigenetic transcriptional repression and participates in X chromosome inactivation of female mammals. It is involved in the initiation of both imprinted and random X inactivation. Ubiquitinated H2A is enriched in inactive X chromosome chromatin. Ubiquitination of H2A functions downstream of methylation of 'Lys-27' of histone H3 (H3K27me). H2AK119Ub by RNF2/RING2 can also be induced by ultraviolet and may be involved in DNA repair. Following DNA double-strand breaks (DSBs), it is ubiquitinated through 'Lys-63' linkage of ubiquitin moieties by the E2 ligase UBE2N and the E3 ligases RNF8 and RNF168, leading to the recruitment of repair proteins to sites of DNA damage. Ubiquitination at Lys-14 and Lys-16 (H2AK13Ub and H2AK15Ub, respectively) in response to DNA damage is initiated by RNF168 that mediates monoubiquitination at these 2 sites, and 'Lys-63'-linked ubiquitin are then conjugated to monoubiquitin; RNF8 is able to extend 'Lys-63'-linked ubiquitin chains in vitro. H2AK119Ub and ionizing radiation-induced 'Lys-63'-linked ubiquitination (H2AK13Ub and H2AK15Ub) are distinct events. Phosphorylation on Ser-2 (H2AS1ph) is enhanced during mitosis. Phosphorylation on Ser-2 by RPS6KA5/MSK1 directly represses transcription. Acetylation of H3 inhibits Ser-2 phosphorylation by RPS6KA5/MSK1. Phosphorylation at Thr-121 (H2AT120ph) by DCAF1 is present in the regulatory region of many tumor suppresor genes and down-regulates their transcription. Post-translationally, symmetric dimethylation on Arg-4 by the PRDM1/PRMT5 complex may play a crucial role in the germ-cell lineage. In terms of processing, glutamine methylation at Gln-105 (H2AQ104me) by FBL is specifically dedicated to polymerase I. It is present at 35S ribosomal DNA locus and impairs binding of the FACT complex. Crotonylation (Kcr) is specifically present in male germ cells and marks testis-specific genes in post-meiotic cells, including X-linked genes that escape sex chromosome inactivation in haploid cells. Crotonylation marks active promoters and enhancers and confers resistance to transcriptional repressors. It is also associated with post-meiotically activated genes on autosomes. Post-translationally, hydroxybutyrylation of histones is induced by starvation. In terms of processing, lactylated in macrophages by EP300/P300 by using lactoyl-CoA directly derived from endogenous or exogenous lactate, leading to stimulates gene transcription.

The protein resides in the nucleus. It localises to the chromosome. Core component of nucleosome. Nucleosomes wrap and compact DNA into chromatin, limiting DNA accessibility to the cellular machineries which require DNA as a template. Histones thereby play a central role in transcription regulation, DNA repair, DNA replication and chromosomal stability. DNA accessibility is regulated via a complex set of post-translational modifications of histones, also called histone code, and nucleosome remodeling. In Mus musculus (Mouse), this protein is Histone H2A type 2-A (Hist2h2aa1).